Reading from the N-terminus, the 208-residue chain is Imidazoleglycerol-phosphate dehydratase (208 aa).

This sequence belongs to the imidazoleglycerol-phosphate dehydratase family.

The protein localises to the cytoplasm. The enzyme catalyses D-erythro-1-(imidazol-4-yl)glycerol 3-phosphate = 3-(imidazol-4-yl)-2-oxopropyl phosphate + H2O. It functions in the pathway amino-acid biosynthesis; L-histidine biosynthesis; L-histidine from 5-phospho-alpha-D-ribose 1-diphosphate: step 6/9. The chain is Imidazoleglycerol-phosphate dehydratase from Symbiobacterium thermophilum (strain DSM 24528 / JCM 14929 / IAM 14863 / T).